A 261-amino-acid polypeptide reads, in one-letter code: MNDSLTIAGKSYRSRLLVGTGKYKDFAETRAAIDASGAEIVTVAIRRTNIGQNADEPNLLDVLPPERFTILPNTAGCYTADDAVRTLRLARELLDGHALVKLEVLGDPVSLFPNMPETLKAAETLVKDGFQVMVYCADDPIQAKMLEDIGCVAVMPLASLIGSGMGILNPWNLRLIIDQANVPVLVDAGVGTASDAAIAMELGCDGVLMNTAIAHAKDPVLMASAMKKAVEAGREAFLAGRMPRKHYSADPSSPTSGLIGS.

Catalysis depends on K101, which acts as the Schiff-base intermediate with DXP. Residues G162, A188–G189, and N210–T211 each bind 1-deoxy-D-xylulose 5-phosphate.

Belongs to the ThiG family. In terms of assembly, homotetramer. Forms heterodimers with either ThiH or ThiS.

It localises to the cytoplasm. The enzyme catalyses [ThiS sulfur-carrier protein]-C-terminal-Gly-aminoethanethioate + 2-iminoacetate + 1-deoxy-D-xylulose 5-phosphate = [ThiS sulfur-carrier protein]-C-terminal Gly-Gly + 2-[(2R,5Z)-2-carboxy-4-methylthiazol-5(2H)-ylidene]ethyl phosphate + 2 H2O + H(+). It functions in the pathway cofactor biosynthesis; thiamine diphosphate biosynthesis. Catalyzes the rearrangement of 1-deoxy-D-xylulose 5-phosphate (DXP) to produce the thiazole phosphate moiety of thiamine. Sulfur is provided by the thiocarboxylate moiety of the carrier protein ThiS. In vitro, sulfur can be provided by H(2)S. The polypeptide is Thiazole synthase (Aromatoleum aromaticum (strain DSM 19018 / LMG 30748 / EbN1) (Azoarcus sp. (strain EbN1))).